We begin with the raw amino-acid sequence, 125 residues long: Ribonuclease P protein component (125 aa).

It belongs to the RnpA family. As to quaternary structure, consists of a catalytic RNA component (M1 or rnpB) and a protein subunit.

The catalysed reaction is Endonucleolytic cleavage of RNA, removing 5'-extranucleotides from tRNA precursor.. Functionally, RNaseP catalyzes the removal of the 5'-leader sequence from pre-tRNA to produce the mature 5'-terminus. It can also cleave other RNA substrates such as 4.5S RNA. The protein component plays an auxiliary but essential role in vivo by binding to the 5'-leader sequence and broadening the substrate specificity of the ribozyme. The protein is Ribonuclease P protein component of Clostridium perfringens (strain ATCC 13124 / DSM 756 / JCM 1290 / NCIMB 6125 / NCTC 8237 / Type A).